The chain runs to 331 residues: RNA 3'-terminal phosphate cyclase (331 aa).

Residues glutamine 100 and 276-280 each bind ATP; that span reads HLADQ. Histidine 301 serves as the catalytic Tele-AMP-histidine intermediate.

This sequence belongs to the RNA 3'-terminal cyclase family. Type 1 subfamily.

It localises to the cytoplasm. The catalysed reaction is a 3'-end 3'-phospho-ribonucleotide-RNA + ATP = a 3'-end 2',3'-cyclophospho-ribonucleotide-RNA + AMP + diphosphate. Catalyzes the conversion of 3'-phosphate to a 2',3'-cyclic phosphodiester at the end of RNA. The mechanism of action of the enzyme occurs in 3 steps: (A) adenylation of the enzyme by ATP; (B) transfer of adenylate to an RNA-N3'P to produce RNA-N3'PP5'A; (C) and attack of the adjacent 2'-hydroxyl on the 3'-phosphorus in the diester linkage to produce the cyclic end product. The biological role of this enzyme is unknown but it is likely to function in some aspects of cellular RNA processing. This chain is RNA 3'-terminal phosphate cyclase, found in Methanosarcina barkeri (strain Fusaro / DSM 804).